A 417-amino-acid chain; its full sequence is NADH-quinone oxidoreductase subunit D (417 aa).

This sequence belongs to the complex I 49 kDa subunit family. NDH-1 is composed of 14 different subunits. Subunits NuoB, C, D, E, F, and G constitute the peripheral sector of the complex.

It localises to the cell inner membrane. It carries out the reaction a quinone + NADH + 5 H(+)(in) = a quinol + NAD(+) + 4 H(+)(out). NDH-1 shuttles electrons from NADH, via FMN and iron-sulfur (Fe-S) centers, to quinones in the respiratory chain. The immediate electron acceptor for the enzyme in this species is believed to be ubiquinone. Couples the redox reaction to proton translocation (for every two electrons transferred, four hydrogen ions are translocated across the cytoplasmic membrane), and thus conserves the redox energy in a proton gradient. The chain is NADH-quinone oxidoreductase subunit D from Francisella tularensis subsp. holarctica (strain FTNF002-00 / FTA).